Here is a 524-residue protein sequence, read N- to C-terminus: Na(+)/H(+) antiporter NhaB (524 aa).

12 helical membrane passes run I23–A43, G44–L64, L97–F117, L120–F140, F144–I164, L203–P223, F236–L256, A304–I324, F354–F374, L392–V412, A448–I468, and V476–F496.

The protein belongs to the NhaB Na(+)/H(+) (TC 2.A.34) antiporter family.

The protein localises to the cell inner membrane. It catalyses the reaction 2 Na(+)(in) + 3 H(+)(out) = 2 Na(+)(out) + 3 H(+)(in). Its function is as follows. Na(+)/H(+) antiporter that extrudes sodium in exchange for external protons. In Edwardsiella ictaluri (strain 93-146), this protein is Na(+)/H(+) antiporter NhaB.